A 181-amino-acid chain; its full sequence is Ras-like protein 1 (181 aa).

GTP is bound at residue 10–17 (GAGGVGKS). The short motif at 32–40 (YDPTIEDSY) is the Effector region element. Residues 57–61 (DTAGQ) and 116–119 (NKCD) each bind GTP. Residue C178 is modified to Cysteine methyl ester. A lipid anchor (S-geranylgeranyl cysteine) is attached at C178. The propeptide at 179-181 (KML) is removed in mature form.

It belongs to the small GTPase superfamily. Ras family.

It is found in the cell membrane. The enzyme catalyses GTP + H2O = GDP + phosphate + H(+). Its activity is regulated as follows. Alternates between an inactive form bound to GDP and an active form bound to GTP. Activated by a guanine nucleotide-exchange factor (GEF) and inactivated by a GTPase-activating protein (GAP). Ras proteins bind GDP/GTP and possess intrinsic GTPase activity. Plays a role in eye development by regulating cell growth, survival of postmitotic ommatidial cells and differentiation of photoreceptor cells. During larval development, mediates Ptth/tor signaling leading to the production of ecdysone, a hormone required for the initiation of metamorphosis. The sequence is that of Ras-like protein 1 from Drosophila mojavensis (Fruit fly).